Consider the following 147-residue polypeptide: Large ribosomal subunit protein uL15 (147 aa).

Over residues 1 to 20 the composition is skewed to basic and acidic residues; that stretch reads MTLRLNDLKPADGARTERTR. The disordered stretch occupies residues 1–61; that stretch reads MTLRLNDLKP…GFEGGQTPMQ (61 aa). Residues 23–33 show a composition bias toward gly residues; it reads RGIGSGLGKTA. Basic residues predominate over residues 34–47; sequence GRGHKGSFARKGGG.

The protein belongs to the universal ribosomal protein uL15 family. Part of the 50S ribosomal subunit.

Functionally, binds to the 23S rRNA. In Xanthomonas euvesicatoria pv. vesicatoria (strain 85-10) (Xanthomonas campestris pv. vesicatoria), this protein is Large ribosomal subunit protein uL15.